The following is a 447-amino-acid chain: Adenylosuccinate synthetase (447 aa).

GTP contacts are provided by residues 12-18 (GDEGKGK) and 40-42 (GHT). Catalysis depends on Asp13, which acts as the Proton acceptor. Mg(2+)-binding residues include Asp13 and Gly40. Residues 13-16 (DEGK), 38-41 (NAGH), Thr128, Arg142, Gln223, Thr238, and Arg302 contribute to the IMP site. The Proton donor role is filled by His41. 298–304 (TTTGRRR) contributes to the substrate binding site. GTP-binding positions include Arg304, 330–332 (KLD), and 412–414 (SLG).

This sequence belongs to the adenylosuccinate synthetase family. As to quaternary structure, homodimer. Mg(2+) is required as a cofactor.

The protein resides in the cytoplasm. The enzyme catalyses IMP + L-aspartate + GTP = N(6)-(1,2-dicarboxyethyl)-AMP + GDP + phosphate + 2 H(+). It participates in purine metabolism; AMP biosynthesis via de novo pathway; AMP from IMP: step 1/2. Functionally, plays an important role in the de novo pathway of purine nucleotide biosynthesis. Catalyzes the first committed step in the biosynthesis of AMP from IMP. This is Adenylosuccinate synthetase from Thermosynechococcus vestitus (strain NIES-2133 / IAM M-273 / BP-1).